Here is a 100-residue protein sequence, read N- to C-terminus: MAVEHNMQSSTIVDVLEKILDKGVVIAGDITVGIADVELLTIKIRLIVASVDKAKEIGMDWWENDPYLSSKGANNKALEEENKMLHERLKTLEEKIETKR.

Belongs to the gas vesicle GvpA family. In terms of assembly, interacts with GvpA.

It is found in the gas vesicle. A minor component of the gas vesicle, might be involved in nucleating gas vesicle formation. This protein could be important for the shape determination of the gas vesicle. Gas vesicles (GV) are hollow, gas filled proteinaceous nanostructures. During planktonic growth they allow positioning of the organism at a favorable depth for light or nutrient acquisition. Functionally, when a minimal gvp locus (gvpA2-gvpR-gvpN-gvpF-gvpG-gvpL-gvpS-gvpK-gvpJ-gvpT-gvpU, called pNL29) is expressed in E.coli gas vesicles are made. The polypeptide is Gas vesicle protein J (Priestia megaterium (Bacillus megaterium)).